Reading from the N-terminus, the 421-residue chain is Meiotic fizzy-related protein 1 (421 aa).

The disordered stretch occupies residues 79–107; sequence DTPDRKSYSLSPISPQSQDMLRQPQKPKR. Residues 86-98 are compositionally biased toward polar residues; it reads YSLSPISPQSQDM. WD repeat units lie at residues 123 to 160, 164 to 203, 206 to 246, 247 to 286, 289 to 331, 333 to 374, and 377 to 416; these read KNDFYLNLLDWGQSNVLAVGLASSIYLWSAASGKVVQL, GATNHVTSVLWTGKGTQLAVGTDSGVIYIWDIESTKSVRS, GHSE…EMMK, VHEQEICGLQWDRSLGQLASGGNDNNLFVWDYRSSRPLHK, EHTA…LQNK, DTGS…NIAN, and AHTNRVLYLSMSPDGQSIVTGAGDETLRFWKLFNKKPKEE.

The protein belongs to the WD repeat CDC20/Fizzy family. In terms of assembly, interacts with mes1.

The protein localises to the nucleus. In terms of biological role, meiosis-specific activator of the anaphase promoting complex/cyclosome (APC/C). Involved in cdc13 degradation. The chain is Meiotic fizzy-related protein 1 (mfr1) from Schizosaccharomyces pombe (strain 972 / ATCC 24843) (Fission yeast).